The sequence spans 621 residues: DEAD-box ATP-dependent RNA helicase 39 (621 aa).

The Q motif motif lies at 112 to 140; it reads ENFQELGLSEEVMGALQELNIEVPTEIQC. A Helicase ATP-binding domain is found at 143 to 330; the sequence is IPAVMERKSV…DEEFQGIEHL (188 aa). An ATP-binding site is contributed by 156-163; it reads SHTGSGKT. The DEAD box motif lies at 270–273; that stretch reads DEAD. Residues 355–505 form the Helicase C-terminal domain; that stretch reads KLEALLQVLE…LESLTTDNVR (151 aa). Residues 497-621 form a disordered region; sequence ESLTTDNVRR…RGKSSSARAS (125 aa). Residues 503–537 show a composition bias toward basic and acidic residues; the sequence is NVRRDAARTHITQEKGRSVKQIREVSKQRNSRDKP. Low complexity predominate over residues 555 to 572; the sequence is KSSSSSFSKPRKASSPPE.

This sequence belongs to the DEAD box helicase family.

The catalysed reaction is ATP + H2O = ADP + phosphate + H(+). This is DEAD-box ATP-dependent RNA helicase 39 (RH39) from Arabidopsis thaliana (Mouse-ear cress).